The sequence spans 211 residues: Metalloproteinase inhibitor 3 (211 aa).

An N-terminal signal peptide occupies residues 1–23 (MTPWLGLVVLLGSWSLGDWGAEA). Cys-24 provides a ligand contact to Zn(2+). Involved in metalloproteinase-binding regions lie at residues 24-27 (CTCS) and 88-89 (ES). 6 disulfide bridges follow: Cys-24–Cys-91, Cys-26–Cys-118, Cys-36–Cys-143, Cys-145–Cys-192, Cys-150–Cys-155, and Cys-163–Cys-184. The NTR domain occupies 24–143 (CTCSPSHPQD…GLNYRYHLGC (120 aa)). The segment at 105–188 (TGRVYDGKMY…SKHYACIRQK (84 aa)) is mediates interaction with EFEMP1. N-linked (GlcNAc...) asparagine glycosylation occurs at Asn-207.

This sequence belongs to the protease inhibitor I35 (TIMP) family. In terms of assembly, interacts with EFEMP1. Interacts with KDR.

It localises to the secreted. The protein localises to the extracellular space. Its subcellular location is the extracellular matrix. In terms of biological role, mediates a variety of processes including matrix regulation and turnover, inflammation, and angiogenesis, through reversible inhibition of zinc protease superfamily enzymes, primarily matrix metalloproteinases (MMPs). Regulates extracellular matrix (ECM) remodeling through inhibition of matrix metalloproteinases (MMP) including MMP-1, MMP-2, MMP-3, MMP-7, MMP-9, MMP-13, MMP-14 and MMP-15. Additionally, modulates the processing of amyloid precursor protein (APP) and apolipoprotein E receptor ApoER2 by inhibiting two alpha-secretases ADAM10 and ADAM17. Functions as a tumor suppressor and a potent inhibitor of angiogenesis. Exerts its anti-angiogenic effect by directly interacting with vascular endothelial growth factor (VEGF) receptor-2/KDR, preventing its binding to the VEGFA ligand. Selectively induces apoptosis in angiogenic endothelial cells through a caspase-independent cell death pathway. Mechanistically, inhibits matrix-induced focal adhesion kinase PTK2 tyrosine phosphorylation and association with paxillin/PXN and disrupts the incorporation of ITGB3, PTK2 and PXN into focal adhesion contacts on the matrix. The polypeptide is Metalloproteinase inhibitor 3 (TIMP3) (Bos taurus (Bovine)).